Reading from the N-terminus, the 171-residue chain is Shikimate kinase (171 aa).

11–16 (GTGKTT) is an ATP binding site. T15 provides a ligand contact to Mg(2+). The substrate site is built by D33, R57, and G79. Position 117 (R117) interacts with ATP. R136 is a binding site for substrate.

The protein belongs to the shikimate kinase family. In terms of assembly, monomer. It depends on Mg(2+) as a cofactor.

Its subcellular location is the cytoplasm. It catalyses the reaction shikimate + ATP = 3-phosphoshikimate + ADP + H(+). The protein operates within metabolic intermediate biosynthesis; chorismate biosynthesis; chorismate from D-erythrose 4-phosphate and phosphoenolpyruvate: step 5/7. Its function is as follows. Catalyzes the specific phosphorylation of the 3-hydroxyl group of shikimic acid using ATP as a cosubstrate. The sequence is that of Shikimate kinase from Caldanaerobacter subterraneus subsp. tengcongensis (strain DSM 15242 / JCM 11007 / NBRC 100824 / MB4) (Thermoanaerobacter tengcongensis).